Reading from the N-terminus, the 353-residue chain is UPF0283 membrane protein YcjF (353 aa).

A disordered region spans residues 16 to 35 (KEESTSAFKAQQTFSEAESR). Over residues 20-31 (TSAFKAQQTFSE) the composition is skewed to polar residues. 3 helical membrane-spanning segments follow: residues 70-90 (MVMG…VQWT), 100-120 (VALG…GSVV), and 213-233 (ESTL…FIAW).

This sequence belongs to the UPF0283 family.

It is found in the cell inner membrane. The chain is UPF0283 membrane protein YcjF from Salmonella heidelberg (strain SL476).